Here is a 591-residue protein sequence, read N- to C-terminus: Pentatricopeptide repeat-containing protein At3g47530 (591 aa).

PPR repeat units lie at residues 76-110 (TLSH…SSLP), 112-146 (NPLS…GFLS), 147-177 (DSLL…IPKR), 178-208 (DTVS…MKND), 216-250 (DGVT…GLSG), 251-281 (ALNL…MRER), 282-316 (NVVS…GISP), 317-351 (EEQT…EFKI), and 354-384 (NLHH…MEMK). The segment at 389–464 (IWRTLLGACR…KPGCSAIELQ (76 aa)) is type E motif. A type E(+) motif region spans residues 465–495 (GTVHEFIVDDVSHPRKEEIYKMLAEINQQLK). The interval 496–591 (IAGYVAEITS…GGSCSCNDFW (96 aa)) is type DYW motif.

The protein belongs to the PPR family. PCMP-H subfamily.

This Arabidopsis thaliana (Mouse-ear cress) protein is Pentatricopeptide repeat-containing protein At3g47530 (PCMP-H76).